The following is a 64-amino-acid chain: Cytochrome c oxidase subunit 2 (64 aa).

The Mitochondrial intermembrane portion of the chain corresponds to 1–14 (MAHPSQLGFQDAAS). The helical transmembrane segment at 15-45 (PVMEELXHFHDHTLMIVFLISTLVXYIIVAM) threads the bilayer. The Mitochondrial matrix portion of the chain corresponds to 46–64 (VSTKLTNKYVLDSQEIEIV).

The protein belongs to the cytochrome c oxidase subunit 2 family. In terms of assembly, component of the cytochrome c oxidase (complex IV, CIV), a multisubunit enzyme composed of 14 subunits. The complex is composed of a catalytic core of 3 subunits MT-CO1, MT-CO2 and MT-CO3, encoded in the mitochondrial DNA, and 11 supernumerary subunits COX4I, COX5A, COX5B, COX6A, COX6B, COX6C, COX7A, COX7B, COX7C, COX8 and NDUFA4, which are encoded in the nuclear genome. The complex exists as a monomer or a dimer and forms supercomplexes (SCs) in the inner mitochondrial membrane with NADH-ubiquinone oxidoreductase (complex I, CI) and ubiquinol-cytochrome c oxidoreductase (cytochrome b-c1 complex, complex III, CIII), resulting in different assemblies (supercomplex SCI(1)III(2)IV(1) and megacomplex MCI(2)III(2)IV(2)). Found in a complex with TMEM177, COA6, COX18, COX20, SCO1 and SCO2. Interacts with TMEM177 in a COX20-dependent manner. Interacts with COX20. Interacts with COX16. Cu cation serves as cofactor.

It is found in the mitochondrion inner membrane. It catalyses the reaction 4 Fe(II)-[cytochrome c] + O2 + 8 H(+)(in) = 4 Fe(III)-[cytochrome c] + 2 H2O + 4 H(+)(out). In terms of biological role, component of the cytochrome c oxidase, the last enzyme in the mitochondrial electron transport chain which drives oxidative phosphorylation. The respiratory chain contains 3 multisubunit complexes succinate dehydrogenase (complex II, CII), ubiquinol-cytochrome c oxidoreductase (cytochrome b-c1 complex, complex III, CIII) and cytochrome c oxidase (complex IV, CIV), that cooperate to transfer electrons derived from NADH and succinate to molecular oxygen, creating an electrochemical gradient over the inner membrane that drives transmembrane transport and the ATP synthase. Cytochrome c oxidase is the component of the respiratory chain that catalyzes the reduction of oxygen to water. Electrons originating from reduced cytochrome c in the intermembrane space (IMS) are transferred via the dinuclear copper A center (CU(A)) of subunit 2 and heme A of subunit 1 to the active site in subunit 1, a binuclear center (BNC) formed by heme A3 and copper B (CU(B)). The BNC reduces molecular oxygen to 2 water molecules using 4 electrons from cytochrome c in the IMS and 4 protons from the mitochondrial matrix. This Scaphirhynchus platorynchus (Shovelnose sturgeon) protein is Cytochrome c oxidase subunit 2 (mt-co2).